A 495-amino-acid chain; its full sequence is UDP-N-acetylmuramoyl-L-alanyl-D-glutamate--2,6-diaminopimelate ligase (495 aa).

UDP-N-acetyl-alpha-D-muramoyl-L-alanyl-D-glutamate contacts are provided by residues leucine 27, serine 29, and histidine 44–threonine 46. An ATP-binding site is contributed by glycine 116–threonine 122. Residues asparagine 157, threonine 158 to threonine 159, serine 185, glutamine 191, and arginine 193 each bind UDP-N-acetyl-alpha-D-muramoyl-L-alanyl-D-glutamate. Lysine 225 carries the post-translational modification N6-carboxylysine. Meso-2,6-diaminopimelate is bound by residues arginine 390, aspartate 414–arginine 417, glycine 465, and glutamate 469. Positions aspartate 414 to arginine 417 match the Meso-diaminopimelate recognition motif motif.

The protein belongs to the MurCDEF family. MurE subfamily. It depends on Mg(2+) as a cofactor. Post-translationally, carboxylation is probably crucial for Mg(2+) binding and, consequently, for the gamma-phosphate positioning of ATP.

The protein resides in the cytoplasm. It catalyses the reaction UDP-N-acetyl-alpha-D-muramoyl-L-alanyl-D-glutamate + meso-2,6-diaminopimelate + ATP = UDP-N-acetyl-alpha-D-muramoyl-L-alanyl-gamma-D-glutamyl-meso-2,6-diaminopimelate + ADP + phosphate + H(+). The protein operates within cell wall biogenesis; peptidoglycan biosynthesis. In terms of biological role, catalyzes the addition of meso-diaminopimelic acid to the nucleotide precursor UDP-N-acetylmuramoyl-L-alanyl-D-glutamate (UMAG) in the biosynthesis of bacterial cell-wall peptidoglycan. In Sodalis glossinidius (strain morsitans), this protein is UDP-N-acetylmuramoyl-L-alanyl-D-glutamate--2,6-diaminopimelate ligase.